Consider the following 428-residue polypeptide: Serine--tRNA ligase (428 aa).

Residue 235–237 (TAE) participates in L-serine binding. An ATP-binding site is contributed by 266 to 268 (RSE). Glu-289 serves as a coordination point for L-serine. 353 to 356 (EISS) is an ATP binding site. Ser-389 lines the L-serine pocket.

This sequence belongs to the class-II aminoacyl-tRNA synthetase family. Type-1 seryl-tRNA synthetase subfamily. Homodimer. The tRNA molecule binds across the dimer.

Its subcellular location is the cytoplasm. It catalyses the reaction tRNA(Ser) + L-serine + ATP = L-seryl-tRNA(Ser) + AMP + diphosphate + H(+). The catalysed reaction is tRNA(Sec) + L-serine + ATP = L-seryl-tRNA(Sec) + AMP + diphosphate + H(+). It participates in aminoacyl-tRNA biosynthesis; selenocysteinyl-tRNA(Sec) biosynthesis; L-seryl-tRNA(Sec) from L-serine and tRNA(Sec): step 1/1. Functionally, catalyzes the attachment of serine to tRNA(Ser). Is also able to aminoacylate tRNA(Sec) with serine, to form the misacylated tRNA L-seryl-tRNA(Sec), which will be further converted into selenocysteinyl-tRNA(Sec). This Shewanella sediminis (strain HAW-EB3) protein is Serine--tRNA ligase.